Reading from the N-terminus, the 362-residue chain is Molybdopterin synthase catalytic subunit (362 aa).

Substrate contacts are provided by residues 101–102 (HR), K117, and 124–126 (KKE).

Belongs to the MoaE family. MOCS2B subfamily. Heterotetramer; composed of 2 small (Mocs2A) and 2 large (Mocs2B) subunits.

The protein resides in the cytoplasm. The enzyme catalyses 2 [molybdopterin-synthase sulfur-carrier protein]-C-terminal-Gly-aminoethanethioate + cyclic pyranopterin phosphate + H2O = molybdopterin + 2 [molybdopterin-synthase sulfur-carrier protein]-C-terminal Gly-Gly + 2 H(+). It participates in cofactor biosynthesis; molybdopterin biosynthesis. Catalytic subunit of the molybdopterin synthase complex, a complex that catalyzes the conversion of precursor Z into molybdopterin. Acts by mediating the incorporation of 2 sulfur atoms from thiocarboxylated Mocs2A into precursor Z to generate a dithiolene group. This chain is Molybdopterin synthase catalytic subunit, found in Drosophila grimshawi (Hawaiian fruit fly).